We begin with the raw amino-acid sequence, 210 residues long: Fibrillarin-like rRNA/tRNA 2'-O-methyltransferase (210 aa).

Residues T70–T71, E88–Y89, D113–A114, and D133–Q136 each bind S-adenosyl-L-methionine.

It belongs to the methyltransferase superfamily. Fibrillarin family. In terms of assembly, interacts with nop5. Component of box C/D small ribonucleoprotein (sRNP) particles that contain rpl7ae, FlpA and nop5, plus a guide RNA.

Involved in pre-rRNA and tRNA processing. Utilizes the methyl donor S-adenosyl-L-methionine to catalyze the site-specific 2'-hydroxyl methylation of ribose moieties in rRNA and tRNA. Site specificity is provided by a guide RNA that base pairs with the substrate. Methylation occurs at a characteristic distance from the sequence involved in base pairing with the guide RNA. This chain is Fibrillarin-like rRNA/tRNA 2'-O-methyltransferase, found in Archaeoglobus fulgidus (strain ATCC 49558 / DSM 4304 / JCM 9628 / NBRC 100126 / VC-16).